The chain runs to 352 residues: Chorismate synthase (352 aa).

Arg-48 lines the NADP(+) pocket. Residues 125–127 (RSS), 238–239 (NA), Gly-278, 293–297 (KPTSS), and Arg-319 contribute to the FMN site.

It belongs to the chorismate synthase family. As to quaternary structure, homotetramer. It depends on FMNH2 as a cofactor.

It carries out the reaction 5-O-(1-carboxyvinyl)-3-phosphoshikimate = chorismate + phosphate. It participates in metabolic intermediate biosynthesis; chorismate biosynthesis; chorismate from D-erythrose 4-phosphate and phosphoenolpyruvate: step 7/7. Functionally, catalyzes the anti-1,4-elimination of the C-3 phosphate and the C-6 proR hydrogen from 5-enolpyruvylshikimate-3-phosphate (EPSP) to yield chorismate, which is the branch point compound that serves as the starting substrate for the three terminal pathways of aromatic amino acid biosynthesis. This reaction introduces a second double bond into the aromatic ring system. The chain is Chorismate synthase from Legionella pneumophila (strain Lens).